Reading from the N-terminus, the 234-residue chain is Phycobilisome rod-core linker polypeptide cpcG (234 aa).

Residues 11 to 191 (SSQNHRVNSF…PRYGSDFKER (181 aa)) enclose the PBS-linker domain.

It belongs to the phycobilisome linker protein family. The phycobilisome is a hemidiscoidal structure that is composed of two distinct substructures: a core complex and a number of rods radiating from the core.

It is found in the plastid. Its subcellular location is the chloroplast thylakoid membrane. Functionally, rod-core linker protein required for attachment of phycocyanin to allophycocyanin in cores of phycobilisomes. Its function is as follows. Linker polypeptides determine the state of aggregation and the location of the disk-shaped phycobiliprotein units within the phycobilisome and modulate their spectroscopic properties in order to mediate a directed and optimal energy transfer. This is Phycobilisome rod-core linker polypeptide cpcG (cpcG) from Cyanidium caldarium (Red alga).